A 557-amino-acid chain; its full sequence is 2-isopropylmalate synthase (557 aa).

Residues 33–307 (PIWCSSDLRD…DPQLDFSDID (275 aa)) enclose the Pyruvate carboxyltransferase domain. Mg(2+) contacts are provided by D42, H246, H248, and N282. The interval 439–557 (ANAPYALVSH…SLSQQQAKAA (119 aa)) is regulatory domain.

It belongs to the alpha-IPM synthase/homocitrate synthase family. LeuA type 2 subfamily. In terms of assembly, homodimer. Mg(2+) serves as cofactor.

It localises to the cytoplasm. The catalysed reaction is 3-methyl-2-oxobutanoate + acetyl-CoA + H2O = (2S)-2-isopropylmalate + CoA + H(+). Its pathway is amino-acid biosynthesis; L-leucine biosynthesis; L-leucine from 3-methyl-2-oxobutanoate: step 1/4. In terms of biological role, catalyzes the condensation of the acetyl group of acetyl-CoA with 3-methyl-2-oxobutanoate (2-ketoisovalerate) to form 3-carboxy-3-hydroxy-4-methylpentanoate (2-isopropylmalate). This Pseudomonas entomophila (strain L48) protein is 2-isopropylmalate synthase.